A 274-amino-acid polypeptide reads, in one-letter code: Large ribosomal subunit protein uL2cz (274 aa).

2 disordered regions span residues 1–25 and 224–274; these read MAIH…VKSN and NPVD…RRSK. Polar residues predominate over residues 7–25; it reads KTSTPSTRNGTVDSQVKSN.

The protein belongs to the universal ribosomal protein uL2 family. In terms of assembly, part of the 50S ribosomal subunit.

The protein resides in the plastid. It localises to the chloroplast. The chain is Large ribosomal subunit protein uL2cz (rpl2-A) from Coffea arabica (Arabian coffee).